A 438-amino-acid polypeptide reads, in one-letter code: Gamma-glutamyl phosphate reductase (438 aa).

It belongs to the gamma-glutamyl phosphate reductase family.

The protein localises to the cytoplasm. The enzyme catalyses L-glutamate 5-semialdehyde + phosphate + NADP(+) = L-glutamyl 5-phosphate + NADPH + H(+). Its pathway is amino-acid biosynthesis; L-proline biosynthesis; L-glutamate 5-semialdehyde from L-glutamate: step 2/2. Catalyzes the NADPH-dependent reduction of L-glutamate 5-phosphate into L-glutamate 5-semialdehyde and phosphate. The product spontaneously undergoes cyclization to form 1-pyrroline-5-carboxylate. This chain is Gamma-glutamyl phosphate reductase, found in Prochlorococcus marinus (strain MIT 9313).